The sequence spans 126 residues: 3-aminoacrylate deaminase RutC (126 aa).

Belongs to the RutC family.

It carries out the reaction (Z)-3-aminoacrylate + H2O + H(+) = 3-oxopropanoate + NH4(+). Involved in pyrimidine catabolism. Catalyzes the deamination of 3-aminoacrylate to malonic semialdehyde, a reaction that can also occur spontaneously. RutC may facilitate the reaction and modulate the metabolic fitness, rather than catalyzing essential functions. In Acinetobacter baylyi (strain ATCC 33305 / BD413 / ADP1), this protein is 3-aminoacrylate deaminase RutC.